Consider the following 314-residue polypeptide: Homoserine kinase (314 aa).

95 to 105 contributes to the ATP binding site; that stretch reads PHSRGLGSSAS.

This sequence belongs to the GHMP kinase family. Homoserine kinase subfamily.

The protein resides in the cytoplasm. It catalyses the reaction L-homoserine + ATP = O-phospho-L-homoserine + ADP + H(+). Its pathway is amino-acid biosynthesis; L-threonine biosynthesis; L-threonine from L-aspartate: step 4/5. Catalyzes the ATP-dependent phosphorylation of L-homoserine to L-homoserine phosphate. This is Homoserine kinase from Rhodococcus erythropolis (strain PR4 / NBRC 100887).